The following is a 322-amino-acid chain: MPGTAVHFNELELFFRQTRFAELVQYFVEMDDDSDDAEAVFPTSEPSRVSEGSENESGSGEEYEGAPHVHFQESTATEEPRTPSKTPASQTTQSIGRTVSIAEATRRASQESPRQTETAGSSSAPDALSTQQPPLEHSTQQNIPTKLPSTQQAVERVVSSQTTSRAAETRERSPEHTEASTQEAETAEEALNKEEFWNLYRSLESKSYISRENVPDIRLLVMCLKANLEIQGEFDRRRVGLKNRLYIILKDLVEEPWELRAYRGCRSADGLTLSVSFKYKNRPQFSGVKVDLEPKFLQESVVNIYYTISFTVRNVRPLTHSV.

The disordered stretch occupies residues 35-188 (DDAEAVFPTS…ASTQEAETAE (154 aa)). Composition is skewed to polar residues over residues 72 to 97 (QEST…SIGR) and 110 to 166 (QESP…TSRA). The span at 167–178 (AETRERSPEHTE) shows a compositional bias: basic and acidic residues.

Its function is as follows. Plasmid partition require REP1, REP2, and a cis-acting DNA sequence (known as STB). REP1 may act by intercalating in the yeast nuclear matrix and binding STB either directly or via REP2. The sequence is that of Trans-acting factor B (B) from Zygosaccharomyces bisporus.